The sequence spans 205 residues: UPF0688 protein C1orf174 homolog (205 aa).

The segment covering 1–18 (MRKRKLSDRVRCSARLKN) has biased composition (basic residues). Disordered regions lie at residues 1-128 (MRKR…PSKV) and 184-205 (AKEE…EGNI). Positions 46 to 63 (NTDKKSPKKLENDEKGLM) are enriched in basic and acidic residues. Over residues 71-108 (INKTDNTASNESNAGNVNTCPSASPFSDLNEVSRNGLT) the composition is skewed to polar residues. The span at 187 to 196 (EEEDDDDDYA) shows a compositional bias: acidic residues.

This sequence belongs to the UPF0688 family.

The protein resides in the nucleus. The polypeptide is UPF0688 protein C1orf174 homolog (Xenopus laevis (African clawed frog)).